The primary structure comprises 64 residues: Large ribosomal subunit protein bL35 (64 aa).

Residues 1–28 are disordered; sequence MPKVKTKSGAKKRFKLTGSGKIKRKSAY.

This sequence belongs to the bacterial ribosomal protein bL35 family.

The polypeptide is Large ribosomal subunit protein bL35 (Cytophaga hutchinsonii (strain ATCC 33406 / DSM 1761 / CIP 103989 / NBRC 15051 / NCIMB 9469 / D465)).